The primary structure comprises 571 residues: Acetolactate synthase large subunit (571 aa).

Thiamine diphosphate is bound at residue Glu-51. FAD is bound by residues Arg-153, 261–282 (HGTY…IGVR), and 304–323 (DIDP…IVGD). The thiamine pyrophosphate binding stretch occupies residues 394–474 (QHQMFTALYY…VLILNLNNSS (81 aa)). Mg(2+) contacts are provided by Asp-445 and Asn-472.

It belongs to the TPP enzyme family. As to quaternary structure, dimer of large and small chains. Mg(2+) serves as cofactor. Requires thiamine diphosphate as cofactor.

The catalysed reaction is 2 pyruvate + H(+) = (2S)-2-acetolactate + CO2. It participates in amino-acid biosynthesis; L-isoleucine biosynthesis; L-isoleucine from 2-oxobutanoate: step 1/4. Its pathway is amino-acid biosynthesis; L-valine biosynthesis; L-valine from pyruvate: step 1/4. The chain is Acetolactate synthase large subunit (ilvI) from Buchnera aphidicola subsp. Acyrthosiphon pisum (strain APS) (Acyrthosiphon pisum symbiotic bacterium).